The chain runs to 346 residues: Glycerol-1-phosphate dehydrogenase [NAD(P)+] (346 aa).

NAD(+) is bound by residues 93 to 97 (GSIID) and 115 to 118 (TTAS). D120 serves as a coordination point for substrate. S124 contributes to the NAD(+) binding site. D167 is a binding site for substrate. Positions 167 and 247 each coordinate Zn(2+). H251 serves as a coordination point for substrate. H263 serves as a coordination point for Zn(2+).

Belongs to the glycerol-1-phosphate dehydrogenase family. Zn(2+) is required as a cofactor.

Its subcellular location is the cytoplasm. It carries out the reaction sn-glycerol 1-phosphate + NAD(+) = dihydroxyacetone phosphate + NADH + H(+). It catalyses the reaction sn-glycerol 1-phosphate + NADP(+) = dihydroxyacetone phosphate + NADPH + H(+). It functions in the pathway membrane lipid metabolism; glycerophospholipid metabolism. Functionally, catalyzes the NAD(P)H-dependent reduction of dihydroxyacetonephosphate (DHAP or glycerone phosphate) to glycerol 1-phosphate (G1P). The G1P thus generated is used as the glycerophosphate backbone of phospholipids in the cellular membranes of Archaea. The polypeptide is Glycerol-1-phosphate dehydrogenase [NAD(P)+] (Pyrococcus horikoshii (strain ATCC 700860 / DSM 12428 / JCM 9974 / NBRC 100139 / OT-3)).